An 82-amino-acid polypeptide reads, in one-letter code: UPF0180 protein BH2667 (82 aa).

The protein belongs to the UPF0180 family.

This is UPF0180 protein BH2667 from Halalkalibacterium halodurans (strain ATCC BAA-125 / DSM 18197 / FERM 7344 / JCM 9153 / C-125) (Bacillus halodurans).